The following is a 554-amino-acid chain: MAKVVKFDSEARAAMIRGVDILANTVKVTLGPKGRNVVIDKSYGAPRITKDGVSVAKEIDLEDKFENMGAQMVKEVASKTNEEAGDGTTTATILAQAIVKEGVKYVTAGMNPMDVKRGIDAAVEHVKASLIASAKKVKDTDEIAQVGTISANGDKEIGNMIAKAMQKVGNEGVITVEEAKGVETELDVVEGMQFDRGYLSPYFITNADKMTTELENPFILLHEKKLTNLQPMVPLLEAVVQAGRPLMIISEDVEGEALATLVVNKLRGGLKVVAVKAPGFGDRRKSMLDDIAILTGGQVISEDIGVKLENVKLTDLGSCKRVKVDKDNSTIISGNGKKSEIEARCAQIKQQVGETTSDYDREKLQERLAKLAGGVAVIKVGGATEVEVKERKDRVEDALNATRAAAEEGIVVGGGCALLYASQSLDTLKVKGDDQKAGVALVAKALQAPIRQITLNAGVDGSVVVGKLLEQNKKNMGYDAQNEEYVDMFAKGIIDPVKVVRTALQDAASIAGLLVTTEAMIADKPDDKDSGAGGMSGGMPGGMGGMGGMGGMGM.

ATP-binding positions include 29–32 (TLGP), lysine 50, 86–90 (DGTTT), glycine 414, and aspartate 495.

Belongs to the chaperonin (HSP60) family. As to quaternary structure, forms a cylinder of 14 subunits composed of two heptameric rings stacked back-to-back. Interacts with the co-chaperonin GroES.

The protein localises to the cytoplasm. It catalyses the reaction ATP + H2O + a folded polypeptide = ADP + phosphate + an unfolded polypeptide.. Functionally, together with its co-chaperonin GroES, plays an essential role in assisting protein folding. The GroEL-GroES system forms a nano-cage that allows encapsulation of the non-native substrate proteins and provides a physical environment optimized to promote and accelerate protein folding. The protein is Chaperonin GroEL of Pelagibacter ubique (strain HTCC1062).